Here is a 288-residue protein sequence, read N- to C-terminus: MASLKEIDSRIKSTSKMKQITKAMNMVSSSKLRRAEKNTKSFRPYMEKMQDAITAVAGSNSTSNHPMLKSRDIKRSGYLVITSDKGLAGAYSTNVLKSLVNDINSKHNDSSEYSLIVLGQQGVDFFKHRGYEIESSLVEVPDQPSFKSIQSIAKHAIDLFSEENIDELTIYYSHYVSVLENKPATKQVLPLSQEDSGQGHGQMSSYEFEPDKESILSVILPQYVESLIYGTILDAKASEHASRMTAMRNASDNATELIDDLSLEYNRARQAAITQQITEIVGGSSALE.

This sequence belongs to the ATPase gamma chain family. F-type ATPases have 2 components, CF(1) - the catalytic core - and CF(0) - the membrane proton channel. CF(1) has five subunits: alpha(3), beta(3), gamma(1), delta(1), epsilon(1). CF(0) has three main subunits: a, b and c.

Its subcellular location is the cell membrane. Functionally, produces ATP from ADP in the presence of a proton gradient across the membrane. The gamma chain is believed to be important in regulating ATPase activity and the flow of protons through the CF(0) complex. The chain is ATP synthase gamma chain from Staphylococcus epidermidis (strain ATCC 35984 / DSM 28319 / BCRC 17069 / CCUG 31568 / BM 3577 / RP62A).